Consider the following 159-residue polypeptide: Putative pre-16S rRNA nuclease (159 aa).

This sequence belongs to the YqgF nuclease family.

It is found in the cytoplasm. Its function is as follows. Could be a nuclease involved in processing of the 5'-end of pre-16S rRNA. The chain is Putative pre-16S rRNA nuclease from Synechococcus sp. (strain JA-3-3Ab) (Cyanobacteria bacterium Yellowstone A-Prime).